The sequence spans 161 residues: Ribosome maturation factor RimP (161 aa).

It belongs to the RimP family.

It is found in the cytoplasm. Its function is as follows. Required for maturation of 30S ribosomal subunits. This chain is Ribosome maturation factor RimP, found in Pelobacter propionicus (strain DSM 2379 / NBRC 103807 / OttBd1).